Here is a 210-residue protein sequence, read N- to C-terminus: N-(5'-phosphoribosyl)anthranilate isomerase (210 aa).

It belongs to the TrpF family.

The enzyme catalyses N-(5-phospho-beta-D-ribosyl)anthranilate = 1-(2-carboxyphenylamino)-1-deoxy-D-ribulose 5-phosphate. It participates in amino-acid biosynthesis; L-tryptophan biosynthesis; L-tryptophan from chorismate: step 3/5. This Staphylococcus aureus (strain bovine RF122 / ET3-1) protein is N-(5'-phosphoribosyl)anthranilate isomerase.